The chain runs to 382 residues: Carbamoyl phosphate synthase small chain (382 aa).

A CPSase region spans residues 1-189; it reads MIKSALLVLE…GLPEAKSEDD (189 aa). Serine 47, glycine 241, and glycine 243 together coordinate L-glutamine. The region spanning 193-380 is the Glutamine amidotransferase type-1 domain; the sequence is HVVAYDFGAK…IELIEQYRQS (188 aa). Cysteine 269 functions as the Nucleophile in the catalytic mechanism. Leucine 270, glutamine 273, asparagine 311, glycine 313, and phenylalanine 314 together coordinate L-glutamine. Active-site residues include histidine 353 and glutamate 355.

It belongs to the CarA family. As to quaternary structure, composed of two chains; the small (or glutamine) chain promotes the hydrolysis of glutamine to ammonia, which is used by the large (or ammonia) chain to synthesize carbamoyl phosphate. Tetramer of heterodimers (alpha,beta)4.

The enzyme catalyses hydrogencarbonate + L-glutamine + 2 ATP + H2O = carbamoyl phosphate + L-glutamate + 2 ADP + phosphate + 2 H(+). It catalyses the reaction L-glutamine + H2O = L-glutamate + NH4(+). The protein operates within amino-acid biosynthesis; L-arginine biosynthesis; carbamoyl phosphate from bicarbonate: step 1/1. It participates in pyrimidine metabolism; UMP biosynthesis via de novo pathway; (S)-dihydroorotate from bicarbonate: step 1/3. Its function is as follows. Small subunit of the glutamine-dependent carbamoyl phosphate synthetase (CPSase). CPSase catalyzes the formation of carbamoyl phosphate from the ammonia moiety of glutamine, carbonate, and phosphate donated by ATP, constituting the first step of 2 biosynthetic pathways, one leading to arginine and/or urea and the other to pyrimidine nucleotides. The small subunit (glutamine amidotransferase) binds and cleaves glutamine to supply the large subunit with the substrate ammonia. In Salmonella typhimurium (strain LT2 / SGSC1412 / ATCC 700720), this protein is Carbamoyl phosphate synthase small chain.